The sequence spans 68 residues: Protein SlyX homolog (68 aa).

The protein belongs to the SlyX family.

The sequence is that of Protein SlyX homolog from Ectopseudomonas mendocina (strain ymp) (Pseudomonas mendocina).